Reading from the N-terminus, the 290-residue chain is Small ribosomal subunit biogenesis GTPase RsgA (290 aa).

A CP-type G domain is found at 61–218 (SSELLRPAVA…IVDTPGFSTL (158 aa)). GTP is bound by residues 110 to 113 (NKVD) and 161 to 169 (GPSGAGKST). Zn(2+) contacts are provided by Cys243, Cys248, His250, and Cys256.

The protein belongs to the TRAFAC class YlqF/YawG GTPase family. RsgA subfamily. As to quaternary structure, monomer. Associates with 30S ribosomal subunit, binds 16S rRNA. It depends on Zn(2+) as a cofactor.

It is found in the cytoplasm. One of several proteins that assist in the late maturation steps of the functional core of the 30S ribosomal subunit. Helps release RbfA from mature subunits. May play a role in the assembly of ribosomal proteins into the subunit. Circularly permuted GTPase that catalyzes slow GTP hydrolysis, GTPase activity is stimulated by the 30S ribosomal subunit. This is Small ribosomal subunit biogenesis GTPase RsgA from Clostridium botulinum (strain Eklund 17B / Type B).